A 251-amino-acid chain; its full sequence is Triosephosphate isomerase (251 aa).

Residue 9 to 11 (NWK) participates in substrate binding. Residue His-95 is the Electrophile of the active site. The active-site Proton acceptor is Glu-167. Residues Gly-173, Ser-213, and 234-235 (GG) contribute to the substrate site. Phosphoserine is present on Ser-213.

This sequence belongs to the triosephosphate isomerase family. As to quaternary structure, homodimer.

It is found in the cytoplasm. The enzyme catalyses D-glyceraldehyde 3-phosphate = dihydroxyacetone phosphate. The protein operates within carbohydrate biosynthesis; gluconeogenesis. It functions in the pathway carbohydrate degradation; glycolysis; D-glyceraldehyde 3-phosphate from glycerone phosphate: step 1/1. Functionally, involved in the gluconeogenesis. Catalyzes stereospecifically the conversion of dihydroxyacetone phosphate (DHAP) to D-glyceraldehyde-3-phosphate (G3P). The polypeptide is Triosephosphate isomerase (Halalkalibacterium halodurans (strain ATCC BAA-125 / DSM 18197 / FERM 7344 / JCM 9153 / C-125) (Bacillus halodurans)).